The sequence spans 241 residues: Demethylmenaquinone methyltransferase (241 aa).

S-adenosyl-L-methionine-binding positions include threonine 60, aspartate 81, and 106 to 107; that span reads DA.

It belongs to the class I-like SAM-binding methyltransferase superfamily. MenG/UbiE family.

It catalyses the reaction a 2-demethylmenaquinol + S-adenosyl-L-methionine = a menaquinol + S-adenosyl-L-homocysteine + H(+). Its pathway is quinol/quinone metabolism; menaquinone biosynthesis; menaquinol from 1,4-dihydroxy-2-naphthoate: step 2/2. In terms of biological role, methyltransferase required for the conversion of demethylmenaquinol (DMKH2) to menaquinol (MKH2). This is Demethylmenaquinone methyltransferase from Staphylococcus epidermidis (strain ATCC 35984 / DSM 28319 / BCRC 17069 / CCUG 31568 / BM 3577 / RP62A).